The sequence spans 151 residues: Regulatory protein RecX (151 aa).

The protein belongs to the RecX family.

It localises to the cytoplasm. Modulates RecA activity. This chain is Regulatory protein RecX, found in Actinobacillus pleuropneumoniae serotype 5b (strain L20).